The primary structure comprises 445 residues: Xylose isomerase (445 aa).

Residues H109 and D112 contribute to the active site. The Mg(2+) site is built by E240, E276, H279, D304, D315, D317, and D347.

This sequence belongs to the xylose isomerase family. As to quaternary structure, homotetramer. Mg(2+) is required as a cofactor.

The protein localises to the cytoplasm. It catalyses the reaction alpha-D-xylose = alpha-D-xylulofuranose. The chain is Xylose isomerase from Xanthomonas oryzae pv. oryzae (strain MAFF 311018).